We begin with the raw amino-acid sequence, 101 residues long: Small ribosomal subunit protein uS14 (101 aa).

Belongs to the universal ribosomal protein uS14 family. As to quaternary structure, part of the 30S ribosomal subunit. Contacts proteins S3 and S10.

In terms of biological role, binds 16S rRNA, required for the assembly of 30S particles and may also be responsible for determining the conformation of the 16S rRNA at the A site. The sequence is that of Small ribosomal subunit protein uS14 from Pseudomonas syringae pv. tomato (strain ATCC BAA-871 / DC3000).